The sequence spans 557 residues: Vanadium-dependent bromoperoxidase (557 aa).

The residue at position 1 (Gln-1) is a Pyrrolidone carboxylic acid. Positions 1–22 (QTCSTSDDADDPTPPNERDDEA) are disordered. A disulfide bond links Cys-77 and Cys-86. 2 residues coordinate vanadate: Lys-341 and Arg-349. His-411 is an active-site residue. Vanadate is bound by residues Ser-416, Gly-417, and His-418. His-418 is an active-site residue. A disulfide bridge links Cys-441 with Cys-462. Vanadate contacts are provided by Arg-480 and His-486. Cysteines 544 and 555 form a disulfide.

It belongs to the vanadium-dependent haloperoxidase family. In terms of assembly, homodimer; disulfide-linked. Vanadate is required as a cofactor.

It catalyses the reaction RH + Br(-) + H2O2 = RBr + 2 H2O.. Functionally, catalyzes the halogenation of organic substrates in the presence of hydrogen peroxide. The protein is Vanadium-dependent bromoperoxidase of Ascophyllum nodosum (Knotted wrack).